Here is a 617-residue protein sequence, read N- to C-terminus: Solute carrier family 2, facilitated glucose transporter member 12 (617 aa).

A disordered region spans residues 1 to 29; it reads MVPVENTEGPSLLNQKGTAVETEGSGSRH. At 1–44 the chain is on the cytoplasmic side; the sequence is MVPVENTEGPSLLNQKGTAVETEGSGSRHPPWARGCGMFTFLSS. The segment covering 8-17 has biased composition (polar residues); the sequence is EGPSLLNQKG. A helical transmembrane segment spans residues 45–65; that stretch reads VTAAVSGLLVGYELGIISGAL. At 66-80 the chain is on the extracellular side; that stretch reads LQIKTLLALSCHEQE. A helical membrane pass occupies residues 81–101; sequence MVVSSLVIGALLASLTGGVLI. The Cytoplasmic portion of the chain corresponds to 102 to 115; it reads DRYGRRTAIILSSC. The chain crosses the membrane as a helical span at residues 116 to 136; it reads LLGLGSLVLILSLSYTVLIVG. R137 is a topological domain (extracellular). Residues 138-158 form a helical membrane-spanning segment; sequence IAIGVSISLSSIATCVYIAEI. At 159-172 the chain is on the cytoplasmic side; that stretch reads APQHRRGLLVSLNE. The helical transmembrane segment at 173 to 193 threads the bilayer; sequence LMIVIGILSAYISNYAFANVF. The Extracellular segment spans residues 194–197; sequence HGWK. Residues 198-218 form a helical membrane-spanning segment; it reads YMFGLVIPLGVLQAIAMYFLP. Topologically, residues 219 to 278 are cytoplasmic; the sequence is PSPRFLVMKGQEGAASKVLGRLRALSDTTEELTVIKSSLKDEYQYSFWDLFRSKDNMRTR. A helical transmembrane segment spans residues 279–299; that stretch reads IMIGLTLVFFVQITGQPNILF. Over 300-317 the chain is Extracellular; sequence YASTVLKSVGFQSNEAAS. The chain crosses the membrane as a helical span at residues 318-338; it reads LASTGVGVVKVISTIPATLLV. Topologically, residues 339 to 345 are cytoplasmic; that stretch reads DHVGSKT. A helical membrane pass occupies residues 346-366; it reads FLCIGSSVMAASLVTMGIVNL. Residues 367–466 lie on the Extracellular side of the membrane; it reads NIHMNFTHIC…PAFLKWLSLA (100 aa). N-linked (GlcNAc...) asparagine glycosylation is found at N371, N383, N396, and N401. The helical transmembrane segment at 467–487 threads the bilayer; that stretch reads SLLVYVAAFSIGLGPMPWLVL. The Cytoplasmic portion of the chain corresponds to 488 to 498; that stretch reads SEIFPGGIRGR. The chain crosses the membrane as a helical span at residues 499–519; that stretch reads AMALTSSMNWGINLLISLTFL. The Extracellular portion of the chain corresponds to 520-528; that stretch reads TVTDLIGLP. The chain crosses the membrane as a helical span at residues 529–549; the sequence is WVCFIYTIMSLASLLFVVMFI. Residues 550–617 lie on the Cytoplasmic side of the membrane; that stretch reads PETKGCSLEQ…GQSRQLSPET (68 aa).

The protein belongs to the major facilitator superfamily. Sugar transporter (TC 2.A.1.1) family. Glucose transporter subfamily. In terms of tissue distribution, predominantly expressed in skeletal muscle, heart and prostate, with lower levels in brain, placenta and kidney.

Its subcellular location is the cell membrane. The protein localises to the endomembrane system. It localises to the cytoplasm. It is found in the perinuclear region. The enzyme catalyses D-glucose(out) = D-glucose(in). In terms of biological role, insulin-independent facilitative glucose transporter. The polypeptide is Solute carrier family 2, facilitated glucose transporter member 12 (Homo sapiens (Human)).